The primary structure comprises 220 residues: UPF0758 protein APL_1970 (220 aa).

The MPN domain maps to 98–220 (NINEPYLAVM…YFSFEEEKFR (123 aa)). Zn(2+)-binding residues include His169, His171, and Asp182. The short motif at 169 to 182 (HNHPSGNCTPSESD) is the JAMM motif element.

Belongs to the UPF0758 family.

The polypeptide is UPF0758 protein APL_1970 (Actinobacillus pleuropneumoniae serotype 5b (strain L20)).